The following is an 89-amino-acid chain: Serine-rich and transmembrane domain-containing 2 (89 aa).

Asn-11 carries N-linked (GlcNAc...) asparagine glycosylation. Residues 38 to 58 (YVGLFLSLLAILLILLFTMLL) form a helical membrane-spanning segment.

The protein localises to the membrane. The sequence is that of Serine-rich and transmembrane domain-containing 2 from Mus musculus (Mouse).